A 389-amino-acid polypeptide reads, in one-letter code: Glutamate 5-kinase (389 aa).

ATP is bound at residue Lys16. Substrate is bound by residues Ser56, Asp143, and Asn155. An ATP-binding site is contributed by 175 to 176 (SD). The PUA domain maps to 281-358 (AGELHVDEGA…AEIEAILGYA (78 aa)).

It belongs to the glutamate 5-kinase family.

Its subcellular location is the cytoplasm. The catalysed reaction is L-glutamate + ATP = L-glutamyl 5-phosphate + ADP. The protein operates within amino-acid biosynthesis; L-proline biosynthesis; L-glutamate 5-semialdehyde from L-glutamate: step 1/2. In terms of biological role, catalyzes the transfer of a phosphate group to glutamate to form L-glutamate 5-phosphate. This Rhizobium etli (strain ATCC 51251 / DSM 11541 / JCM 21823 / NBRC 15573 / CFN 42) protein is Glutamate 5-kinase.